Consider the following 508-residue polypeptide: Probable cytosol aminopeptidase (508 aa).

Mn(2+) is bound by residues K274 and D279. The active site involves K286. Residues D297, D356, and E358 each contribute to the Mn(2+) site. Residue R360 is part of the active site.

The protein belongs to the peptidase M17 family. Requires Mn(2+) as cofactor.

The protein localises to the cytoplasm. The catalysed reaction is Release of an N-terminal amino acid, Xaa-|-Yaa-, in which Xaa is preferably Leu, but may be other amino acids including Pro although not Arg or Lys, and Yaa may be Pro. Amino acid amides and methyl esters are also readily hydrolyzed, but rates on arylamides are exceedingly low.. It catalyses the reaction Release of an N-terminal amino acid, preferentially leucine, but not glutamic or aspartic acids.. Functionally, presumably involved in the processing and regular turnover of intracellular proteins. Catalyzes the removal of unsubstituted N-terminal amino acids from various peptides. The polypeptide is Probable cytosol aminopeptidase (Paraburkholderia phytofirmans (strain DSM 17436 / LMG 22146 / PsJN) (Burkholderia phytofirmans)).